The following is a 192-amino-acid chain: Protein Syd (192 aa).

The protein belongs to the Syd family.

The protein resides in the cell inner membrane. Interacts with the SecY protein in vivo. May bind preferentially to an uncomplexed state of SecY, thus functioning either as a chelating agent for excess SecY in the cell or as a regulatory factor that negatively controls the translocase function. In Hahella chejuensis (strain KCTC 2396), this protein is Protein Syd.